Consider the following 291-residue polypeptide: Small ribosomal subunit biogenesis GTPase RsgA (291 aa).

One can recognise a CP-type G domain in the interval 63-221 (KNEIKRPPVS…IADTPGFSAL (159 aa)). GTP contacts are provided by residues 112–115 (TKKD) and 164–172 (GQSGVGKST). Zn(2+) contacts are provided by Cys245, Cys250, His252, and Cys258.

The protein belongs to the TRAFAC class YlqF/YawG GTPase family. RsgA subfamily. Monomer. Associates with 30S ribosomal subunit, binds 16S rRNA. Requires Zn(2+) as cofactor.

The protein resides in the cytoplasm. One of several proteins that assist in the late maturation steps of the functional core of the 30S ribosomal subunit. Helps release RbfA from mature subunits. May play a role in the assembly of ribosomal proteins into the subunit. Circularly permuted GTPase that catalyzes slow GTP hydrolysis, GTPase activity is stimulated by the 30S ribosomal subunit. This chain is Small ribosomal subunit biogenesis GTPase RsgA, found in Staphylococcus saprophyticus subsp. saprophyticus (strain ATCC 15305 / DSM 20229 / NCIMB 8711 / NCTC 7292 / S-41).